Here is a 218-residue protein sequence, read N- to C-terminus: Adenylate kinase (218 aa).

10–15 (GAGKGT) lines the ATP pocket. An NMP region spans residues 30 to 59 (STGDMLRAAVKAGTPLGLEAKKVMDAGGLV). Residues Thr-31, Arg-36, 57–59 (GLV), 85–88 (GFPR), and Gln-92 each bind AMP. Residues 122-159 (GRRVHVASGRTYHVKFNPPKVAGKDDETGEDLIQRADD) form an LID region. ATP is bound by residues Arg-123 and 132 to 133 (TY). AMP contacts are provided by Arg-156 and Arg-167. Position 203 (Gly-203) interacts with ATP.

Belongs to the adenylate kinase family. As to quaternary structure, monomer.

The protein localises to the cytoplasm. It carries out the reaction AMP + ATP = 2 ADP. It participates in purine metabolism; AMP biosynthesis via salvage pathway; AMP from ADP: step 1/1. Functionally, catalyzes the reversible transfer of the terminal phosphate group between ATP and AMP. Plays an important role in cellular energy homeostasis and in adenine nucleotide metabolism. The chain is Adenylate kinase from Laribacter hongkongensis (strain HLHK9).